The following is a 99-amino-acid chain: Nucleoid-associated protein Cj1642 (99 aa).

This sequence belongs to the YbaB/EbfC family. Homodimer.

Its subcellular location is the cytoplasm. The protein localises to the nucleoid. Its function is as follows. Binds to DNA and alters its conformation. May be involved in regulation of gene expression, nucleoid organization and DNA protection. The protein is Nucleoid-associated protein Cj1642 of Campylobacter jejuni subsp. jejuni serotype O:2 (strain ATCC 700819 / NCTC 11168).